Here is a 101-residue protein sequence, read N- to C-terminus: Large ribosomal subunit protein uL24 (101 aa).

Belongs to the universal ribosomal protein uL24 family. Part of the 50S ribosomal subunit.

In terms of biological role, one of two assembly initiator proteins, it binds directly to the 5'-end of the 23S rRNA, where it nucleates assembly of the 50S subunit. Functionally, one of the proteins that surrounds the polypeptide exit tunnel on the outside of the subunit. The sequence is that of Large ribosomal subunit protein uL24 from Elusimicrobium minutum (strain Pei191).